The following is a 291-amino-acid chain: Ribosomal RNA small subunit methyltransferase I (291 aa).

The protein belongs to the methyltransferase superfamily. RsmI family.

The protein localises to the cytoplasm. It carries out the reaction cytidine(1402) in 16S rRNA + S-adenosyl-L-methionine = 2'-O-methylcytidine(1402) in 16S rRNA + S-adenosyl-L-homocysteine + H(+). Its function is as follows. Catalyzes the 2'-O-methylation of the ribose of cytidine 1402 (C1402) in 16S rRNA. In Neisseria meningitidis serogroup B (strain ATCC BAA-335 / MC58), this protein is Ribosomal RNA small subunit methyltransferase I.